Here is a 1381-residue protein sequence, read N- to C-terminus: EH domain-containing and endocytosis protein 1 (1381 aa).

2 EH domains span residues 14-113 and 135-227; these read EQAF…NPAP and DIAK…IRLE. EF-hand domains are found at residues 47-82 and 167-202; these read LPGQ…IAQL and LPNQ…IQLC. Positions 180, 182, 184, and 191 each coordinate Ca(2+). At threonine 238 the chain carries Phosphothreonine. Phosphoserine is present on residues serine 241 and serine 244. The residue at position 245 (threonine 245) is a Phosphothreonine. Residues serine 248 and serine 249 each carry the phosphoserine modification. The residue at position 251 (threonine 251) is a Phosphothreonine. Serine 265 is subject to Phosphoserine. The 36-residue stretch at 276-311 folds into the EF-hand 3 domain; that stretch reads EKKQQFDAIFDSLDKQHAGSLSSAVLVPFFLSSRLN. In terms of domain architecture, EH 3 spans 277–366; the sequence is KKQQFDAIFD…NELLQSPALG (90 aa). Positions 389-535 are disordered; sequence SKPSLQDMPH…SSPVKRTAST (147 aa). Composition is skewed to polar residues over residues 404-424 and 432-447; these read AVNT…NGSL and PSFS…TVVQ. Serine 419 is subject to Phosphoserine. A compositionally biased stretch (low complexity) spans 448–470; sequence NNTNNSFSYDNNNGQATLQQQQP. Phosphothreonine is present on residues threonine 450, threonine 477, and threonine 487. Residues 477–494 are compositionally biased toward polar residues; it reads THSSSGLKKFTPTSNFGQ. At serine 495 the chain carries Phosphoserine. Positions 593-882 form a coiled coil; the sequence is GEASAQLSNA…RELSERQMNL (290 aa). A Glycyl lysine isopeptide (Lys-Gly) (interchain with G-Cter in ubiquitin) cross-link involves residue lysine 674. Phosphoserine is present on serine 848. Positions 898 to 919 are disordered; sequence SASNTDTTTKEATSRGNVHEDT. Positions 905–919 are enriched in basic and acidic residues; sequence TTKEATSRGNVHEDT. Serine 931, serine 950, serine 964, serine 1008, serine 1012, and serine 1020 each carry phosphoserine. Disordered stretches follow at residues 933–1202, 1214–1285, and 1298–1322; these read LNVN…KDEF, VEED…QVSN, and SKAE…NDPI. The span at 937–957 shows a compositional bias: basic and acidic residues; that stretch reads RVKDDEEKTERTESDVFDRDV. 2 stretches are compositionally biased toward polar residues: residues 960–989 and 1005–1019; these read LGSQ…LTET and RSQS…NAPQ. The segment covering 1021-1036 has biased composition (basic and acidic residues); sequence VRDDVELPETLEERDT. Polar residues-rich tracts occupy residues 1037–1049 and 1061–1073; these read INNT…TGNL and ATAS…NETT. Threonine 1046 carries the phosphothreonine modification. 6 positions are modified to phosphoserine: serine 1069, serine 1087, serine 1093, serine 1095, serine 1096, and serine 1100. Residues 1093 to 1103 are compositionally biased toward polar residues; that stretch reads SVSSIQESPKI. A Phosphothreonine modification is found at threonine 1111. Over residues 1127 to 1139 the composition is skewed to acidic residues; the sequence is SDSSSSDDDEFED. Polar residues-rich tracts occupy residues 1147–1164 and 1178–1195; these read TVKT…SSLE and TSPS…TNSI. 2 positions are modified to phosphoserine: serine 1181 and serine 1187. Residues 1214–1226 are compositionally biased toward acidic residues; the sequence is VEEDNGADSESEF. The segment at 1217–1381 is able to bind biological membranes; that stretch reads DNGADSESEF…AATNFLLDSA (165 aa). The span at 1253–1285 shows a compositional bias: polar residues; it reads NAFTGTLTSSSNPTIPKPQVQQQSTSDPAQVSN. Threonine 1307 is modified (phosphothreonine). Lysine 1329 is covalently cross-linked (Glycyl lysine isopeptide (Lys-Gly) (interchain with G-Cter in ubiquitin)). In terms of domain architecture, UBA spans 1338-1380; the sequence is ATTPKSLAVEELSGMGFTEEEAHNALEKCNWDLEAATNFLLDS. Serine 1343 is modified (phosphoserine).

This sequence belongs to the VDP/USO1/EDE1 family. Interacts (via UBA domain) with monoubiquitin and ENT1 (via asparagine-proline-phenylalanine tripeptide motif called NPF). Interacts with PAL1 and SYP1.

The protein localises to the cytoplasm. Its function is as follows. Functions at the internalization step of the clathrin-mediated endocytosis (CME) as an early-acting scaffold protein. Requires clathrin adapter proteins, ENT1/2 and YAP1801/2, for normal spatiotemporal dynamics and viability. Binds to biological membranes in a ubiquitin-dependent manner. This is EH domain-containing and endocytosis protein 1 (EDE1) from Saccharomyces cerevisiae (strain ATCC 204508 / S288c) (Baker's yeast).